The primary structure comprises 626 residues: Glyco-Gag protein (626 aa).

The Cytoplasmic segment spans residues Leu1–Arg66. Residues Leu67–Ser86 form a helical membrane-spanning segment. Residues Glu87 to Asp626 lie on the Extracellular side of the membrane. N-linked (GlcNAc...) asparagine; by host glycosylation occurs at Asn113. Pro residues-rich tracts occupy residues Pro198–Thr212 and Asp249–Pro261. Disordered regions lie at residues Pro198–Arg306 and Arg522–Asp626. 2 stretches are compositionally biased toward basic and acidic residues: residues Arg522 to Arg554 and Arg574 to Lys607. A coiled-coil region spans residues Glu526–Leu566. A CCHC-type zinc finger spans residues Asp590–Lys607.

Post-translationally, glycosylated by host. Cleaved by host near the middle of the molecule, releasing the c-terminal half containing capsid and nucleoprotein domains op GAG.

It localises to the host cell membrane. In terms of biological role, plays a role in viral particle release. Presumably acts by facilitating the fission of the virion bud at the cell surface. May prevent the antiviral activity of murine APOBEC3. The sequence is that of Glyco-Gag protein from Mus musculus (Mouse).